The sequence spans 150 residues: UPF0756 membrane protein ECA1265 (150 aa).

4 helical membrane passes run 1 to 21 (MAYI…GIIS), 51 to 71 (YGLS…IASG), 82 to 102 (FLHW…WLGG), and 127 to 147 (ALFR…SLLI).

It belongs to the UPF0756 family.

The protein resides in the cell membrane. The chain is UPF0756 membrane protein ECA1265 from Pectobacterium atrosepticum (strain SCRI 1043 / ATCC BAA-672) (Erwinia carotovora subsp. atroseptica).